Consider the following 154-residue polypeptide: Transcriptional repressor NrdR (154 aa).

The disordered stretch occupies residues 1–22 (MRCPFCAHDDSQVKDSRPTDDG). A zinc finger spans residues 3-34 (CPFCAHDDSQVKDSRPTDDGAAIRRRRQCEGC). A compositionally biased stretch (basic and acidic residues) spans 7 to 22 (AHDDSQVKDSRPTDDG). An ATP-cone domain is found at 49 to 139 (MTVVKSDGRR…VYKDFREAKD (91 aa)).

The protein belongs to the NrdR family. It depends on Zn(2+) as a cofactor.

Negatively regulates transcription of bacterial ribonucleotide reductase nrd genes and operons by binding to NrdR-boxes. The polypeptide is Transcriptional repressor NrdR (Rhizorhabdus wittichii (strain DSM 6014 / CCUG 31198 / JCM 15750 / NBRC 105917 / EY 4224 / RW1) (Sphingomonas wittichii)).